The primary structure comprises 528 residues: Abrin-d (528 aa).

Residue glutamine 1 is modified to Pyrrolidone carboxylic acid. Glutamate 164 is an active-site residue. N-linked (GlcNAc...) asparagine glycosylation occurs at asparagine 200. Intrachain disulfides connect cysteine 247-cysteine 269, cysteine 286-cysteine 305, and cysteine 329-cysteine 346. The 128-residue stretch at 273-400 folds into the Ricin B-type lectin 1 domain; it reads YEPTVRIGGR…YLMRQGWRTG (128 aa). The 1-alpha repeat unit spans residues 283–325; the sequence is DGMCVDVYDDGYHNGNRIIAWKCKDRLEENQLWTLKSDLTIRS. One copy of the 1-beta repeat lies at 326–366; sequence NGKCLTTEGYAPGNYVMIYDCTSAVAEATYWEIWDNGTIIN. N-linked (GlcNAc...) asparagine glycosylation is found at asparagine 361 and asparagine 401. The 1-gamma repeat unit spans residues 369 to 401; that stretch reads SALVLSAESSSMGGTLTVQTNEYLMRQGWRTGN. The 125-residue stretch at 403-527 folds into the Ricin B-type lectin 2 domain; the sequence is TSPFVTSISG…GKPNQIWLTL (125 aa). One copy of the 2-alpha repeat lies at 414–449; it reads SDLCMQAQGSNVWLADCDNNKKEQQWALYTDGSIRS. 2 disulfide bridges follow: cysteine 417–cysteine 430 and cysteine 456–cysteine 473. One copy of the 2-beta repeat lies at 453-492; the sequence is TNNCLTSKDHKQGSPIVLMACSNGWASQRWLFKNDGSIYS. One copy of the 2-gamma repeat lies at 495-528; it reads DDMVMDVKGSDPSLKQIILWPYTGKPNQIWLTLF.

It in the N-terminal section; belongs to the ribosome-inactivating protein family. Type 2 RIP subfamily. As to quaternary structure, disulfide-linked dimer of A and B chains.

It catalyses the reaction Endohydrolysis of the N-glycosidic bond at one specific adenosine on the 28S rRNA.. In terms of biological role, the A chain is responsible for inhibiting protein synthesis through the catalytic inactivation of 60S ribosomal subunits by removing adenine from position 4,324 of 28S rRNA. The B chain is a galactose-specific lectin that facilitates the binding of abrin to the cell membrane that precedes endocytosis. This is Abrin-d from Abrus precatorius (Indian licorice).